A 184-amino-acid polypeptide reads, in one-letter code: Oligoribonuclease (184 aa).

One can recognise an Exonuclease domain in the interval 10–172; it reads LVWVDCEMTG…ADVLESIAEL (163 aa). Residue Y129 is part of the active site.

This sequence belongs to the oligoribonuclease family.

Its subcellular location is the cytoplasm. In terms of biological role, 3'-to-5' exoribonuclease specific for small oligoribonucleotides. In Tropheryma whipplei (strain Twist) (Whipple's bacillus), this protein is Oligoribonuclease.